Here is a 398-residue protein sequence, read N- to C-terminus: tRNA-specific 2-thiouridylase MnmA (398 aa).

ATP is bound by residues 19-26 and Leu45; that span reads AMSGGVDS. The active-site Nucleophile is Cys113. Residues Cys113 and Cys210 are joined by a disulfide bond. Gly137 is an ATP binding site. The tract at residues 160-162 is interaction with tRNA; sequence RDQ. The active-site Cysteine persulfide intermediate is Cys210.

This sequence belongs to the MnmA/TRMU family.

The protein resides in the cytoplasm. The catalysed reaction is S-sulfanyl-L-cysteinyl-[protein] + uridine(34) in tRNA + AH2 + ATP = 2-thiouridine(34) in tRNA + L-cysteinyl-[protein] + A + AMP + diphosphate + H(+). Its function is as follows. Catalyzes the 2-thiolation of uridine at the wobble position (U34) of tRNA, leading to the formation of s(2)U34. In Rhodopseudomonas palustris (strain BisB5), this protein is tRNA-specific 2-thiouridylase MnmA.